Reading from the N-terminus, the 236-residue chain is Eukaryotic translation initiation factor 3 subunit J (236 aa).

The disordered stretch occupies residues 1-65; the sequence is MADDWESAAD…APAKPKPNKA (65 aa). Residues 28-46 show a composition bias toward acidic residues; it reads GEDEDEDIKDSWEDEEEKK. Positions 47-58 are enriched in basic and acidic residues; it reads DEEKPTKTEAPA.

Belongs to the eIF-3 subunit J family. Component of the eukaryotic translation initiation factor 3 (eIF-3) complex. The eIF-3 complex interacts with pix.

The protein localises to the cytoplasm. Its function is as follows. Component of the eukaryotic translation initiation factor 3 (eIF-3) complex, which is involved in protein synthesis of a specialized repertoire of mRNAs and, together with other initiation factors, stimulates binding of mRNA and methionyl-tRNAi to the 40S ribosome. The eIF-3 complex specifically targets and initiates translation of a subset of mRNAs involved in cell proliferation. This chain is Eukaryotic translation initiation factor 3 subunit J, found in Drosophila melanogaster (Fruit fly).